The sequence spans 671 residues: DNA ligase (671 aa).

NAD(+) contacts are provided by residues 32-36 (DAEYD), 81-82 (SL), and glutamate 113. Lysine 115 acts as the N6-AMP-lysine intermediate in catalysis. 4 residues coordinate NAD(+): arginine 136, glutamate 173, lysine 290, and lysine 314. 4 residues coordinate Zn(2+): cysteine 408, cysteine 411, cysteine 426, and cysteine 432. The BRCT domain occupies 593 to 671 (EIDSPFAGKT…EAEMIRLLGA (79 aa)).

This sequence belongs to the NAD-dependent DNA ligase family. LigA subfamily. Mg(2+) is required as a cofactor. Mn(2+) serves as cofactor.

The catalysed reaction is NAD(+) + (deoxyribonucleotide)n-3'-hydroxyl + 5'-phospho-(deoxyribonucleotide)m = (deoxyribonucleotide)n+m + AMP + beta-nicotinamide D-nucleotide.. DNA ligase that catalyzes the formation of phosphodiester linkages between 5'-phosphoryl and 3'-hydroxyl groups in double-stranded DNA using NAD as a coenzyme and as the energy source for the reaction. It is essential for DNA replication and repair of damaged DNA. The sequence is that of DNA ligase from Salmonella choleraesuis (strain SC-B67).